A 356-amino-acid polypeptide reads, in one-letter code: Tyrosine recombinase XerS (356 aa).

The region spanning 16–121 (TMPWYILEYY…ALSSLYKYLT (106 aa)) is the Core-binding (CB) domain. The 186-residue stretch at 169–354 (EFLQYIDTEY…VNDEQKNALD (186 aa)) folds into the Tyr recombinase domain. Residues arginine 210, lysine 234, histidine 306, arginine 309, and histidine 332 contribute to the active site. Catalysis depends on tyrosine 341, which acts as the O-(3'-phospho-DNA)-tyrosine intermediate.

It belongs to the 'phage' integrase family. XerS subfamily.

It localises to the cytoplasm. FtsK is required for recombination. Site-specific tyrosine recombinase, which acts by catalyzing the cutting and rejoining of the recombining DNA molecules. Essential to convert dimers of the bacterial chromosome into monomers to permit their segregation at cell division. The polypeptide is Tyrosine recombinase XerS (Streptococcus sanguinis (strain SK36)).